The chain runs to 193 residues: Ribosomal RNA large subunit methyltransferase E (193 aa).

Residues Gly-49, Phe-51, Asp-69, Asp-86, and Asp-106 each coordinate S-adenosyl-L-methionine. The active-site Proton acceptor is the Lys-146.

The protein belongs to the class I-like SAM-binding methyltransferase superfamily. RNA methyltransferase RlmE family.

It is found in the cytoplasm. It catalyses the reaction uridine(2552) in 23S rRNA + S-adenosyl-L-methionine = 2'-O-methyluridine(2552) in 23S rRNA + S-adenosyl-L-homocysteine + H(+). Its function is as follows. Specifically methylates the uridine in position 2552 of 23S rRNA at the 2'-O position of the ribose in the fully assembled 50S ribosomal subunit. The polypeptide is Ribosomal RNA large subunit methyltransferase E (Brachyspira hyodysenteriae (strain ATCC 49526 / WA1)).